Consider the following 825-residue polypeptide: Zinc finger protein 229 (825 aa).

The interval 1–26 (METLTSRHEKRALHSQASAISQDREE) is disordered. In terms of domain architecture, KRAB spans 34–108 (LSFKDVAVVF…SHKELSSCKI (75 aa)). The C2H2-type 1; degenerate zinc finger occupies 291-315 (KLCQYDEFSEGLRHSAHLNRHQRVP). 7 C2H2-type zinc fingers span residues 349–371 (YRCDVCGKGFRYKSVLLIHQGVH), 377–399 (YKCEECGKAFGRSSNLLVHQRVH), 405–427 (YKCSECGKGFSYSSVLQVHQRLH), 433–455 (YTCSECGKGFCAKSALHKHQHIH), 461–483 (YSCGECGKGFSCSSHLSSHQKTH), 489–511 (YQCDKCGKGFSHNSYLQAHQRVH), and 517–539 (YKCNVCGKSFSYSSGLLMHQRLH). Residue lysine 543 forms a Glycyl lysine isopeptide (Lys-Gly) (interchain with G-Cter in SUMO2) linkage. 10 C2H2-type zinc fingers span residues 545 to 566 (YKCECGKSFGRSSDLHIHQRVH), 572 to 594 (YKCSECGKGFRRNSDLHSHQRVH), 600 to 622 (YVCDVCGKGFIYSSDLLIHQRVH), 628 to 650 (YKCAECGKGFSYSSGLLIHQRVH), 656 to 678 (YRCQECGKGFRCTSSLHKHQRVH), 684 to 706 (YTCDQCGKGFSYGSNLRTHQRLH), 712 to 734 (YTCCECGKGFRYGSGLLSHKRVH), 740 to 762 (YRCHVCGKGYSQSSHLQGHQRVH), 768 to 790 (YKCEECGKGFGRNSCLHVHQRVH), and 796 to 818 (YTCGVCGKGFSYTSGLRNHQRVH).

Belongs to the krueppel C2H2-type zinc-finger protein family.

It localises to the nucleus. Functionally, may be involved in transcriptional regulation. This Homo sapiens (Human) protein is Zinc finger protein 229.